The primary structure comprises 706 residues: Glycine--tRNA ligase beta subunit (706 aa).

Belongs to the class-II aminoacyl-tRNA synthetase family. As to quaternary structure, tetramer of two alpha and two beta subunits.

Its subcellular location is the cytoplasm. It carries out the reaction tRNA(Gly) + glycine + ATP = glycyl-tRNA(Gly) + AMP + diphosphate. This Hyphomonas neptunium (strain ATCC 15444) protein is Glycine--tRNA ligase beta subunit.